Consider the following 55-residue polypeptide: MAKGARDKIKLESTAGTGHFYTTTKNKRNMPEKMAIKKFDPVVRKHVEYKETKIK.

The protein belongs to the bacterial ribosomal protein bL33 family.

In Burkholderia ambifaria (strain MC40-6), this protein is Large ribosomal subunit protein bL33.